Reading from the N-terminus, the 136-residue chain is Large ribosomal subunit protein eL27B (136 aa).

The protein belongs to the eukaryotic ribosomal protein eL27 family. In terms of assembly, component of the large ribosomal subunit (LSU). Mature yeast ribosomes consist of a small (40S) and a large (60S) subunit. The 40S small subunit contains 1 molecule of ribosomal RNA (18S rRNA) and at least 33 different proteins. The large 60S subunit contains 3 rRNA molecules (25S, 5.8S and 5S rRNA) and at least 46 different proteins.

The protein resides in the cytoplasm. In terms of biological role, component of the ribosome, a large ribonucleoprotein complex responsible for the synthesis of proteins in the cell. The small ribosomal subunit (SSU) binds messenger RNAs (mRNAs) and translates the encoded message by selecting cognate aminoacyl-transfer RNA (tRNA) molecules. The large subunit (LSU) contains the ribosomal catalytic site termed the peptidyl transferase center (PTC), which catalyzes the formation of peptide bonds, thereby polymerizing the amino acids delivered by tRNAs into a polypeptide chain. The nascent polypeptides leave the ribosome through a tunnel in the LSU and interact with protein factors that function in enzymatic processing, targeting, and the membrane insertion of nascent chains at the exit of the ribosomal tunnel. The chain is Large ribosomal subunit protein eL27B (rpl2702) from Schizosaccharomyces pombe (strain 972 / ATCC 24843) (Fission yeast).